Consider the following 458-residue polypeptide: ATP synthase subunit beta (458 aa).

Residue 148–155 (GGAGVGKT) coordinates ATP.

Belongs to the ATPase alpha/beta chains family. As to quaternary structure, F-type ATPases have 2 components, CF(1) - the catalytic core - and CF(0) - the membrane proton channel. CF(1) has five subunits: alpha(3), beta(3), gamma(1), delta(1), epsilon(1). CF(0) has three main subunits: a(1), b(2) and c(9-12). The alpha and beta chains form an alternating ring which encloses part of the gamma chain. CF(1) is attached to CF(0) by a central stalk formed by the gamma and epsilon chains, while a peripheral stalk is formed by the delta and b chains.

The protein resides in the cell inner membrane. It carries out the reaction ATP + H2O + 4 H(+)(in) = ADP + phosphate + 5 H(+)(out). Functionally, produces ATP from ADP in the presence of a proton gradient across the membrane. The catalytic sites are hosted primarily by the beta subunits. The sequence is that of ATP synthase subunit beta from Pseudomonas putida (strain ATCC 700007 / DSM 6899 / JCM 31910 / BCRC 17059 / LMG 24140 / F1).